Consider the following 285-residue polypeptide: Pantothenate synthetase (285 aa).

30 to 37 (MGYLHEGH) is a binding site for ATP. The Proton donor role is filled by H37. (R)-pantoate is bound at residue Q61. Q61 is a binding site for beta-alanine. 148-151 (GKKD) provides a ligand contact to ATP. A (R)-pantoate-binding site is contributed by Q154. ATP contacts are provided by residues V177 and 185–188 (LSSR).

This sequence belongs to the pantothenate synthetase family. In terms of assembly, homodimer.

It is found in the cytoplasm. The enzyme catalyses (R)-pantoate + beta-alanine + ATP = (R)-pantothenate + AMP + diphosphate + H(+). It functions in the pathway cofactor biosynthesis; (R)-pantothenate biosynthesis; (R)-pantothenate from (R)-pantoate and beta-alanine: step 1/1. Its function is as follows. Catalyzes the condensation of pantoate with beta-alanine in an ATP-dependent reaction via a pantoyl-adenylate intermediate. The chain is Pantothenate synthetase from Leptospira interrogans serogroup Icterohaemorrhagiae serovar Lai (strain 56601).